Consider the following 158-residue polypeptide: NAD(P)H-quinone oxidoreductase subunit J, chloroplastic (158 aa).

The protein belongs to the complex I 30 kDa subunit family. As to quaternary structure, NDH is composed of at least 16 different subunits, 5 of which are encoded in the nucleus.

Its subcellular location is the plastid. The protein localises to the chloroplast thylakoid membrane. The catalysed reaction is a plastoquinone + NADH + (n+1) H(+)(in) = a plastoquinol + NAD(+) + n H(+)(out). It catalyses the reaction a plastoquinone + NADPH + (n+1) H(+)(in) = a plastoquinol + NADP(+) + n H(+)(out). NDH shuttles electrons from NAD(P)H:plastoquinone, via FMN and iron-sulfur (Fe-S) centers, to quinones in the photosynthetic chain and possibly in a chloroplast respiratory chain. The immediate electron acceptor for the enzyme in this species is believed to be plastoquinone. Couples the redox reaction to proton translocation, and thus conserves the redox energy in a proton gradient. In Draba nemorosa (Woodland whitlowgrass), this protein is NAD(P)H-quinone oxidoreductase subunit J, chloroplastic.